We begin with the raw amino-acid sequence, 279 residues long: tRNA uridine(34) hydroxylase (279 aa).

Positions 126 to 221 (TKPGMHVIDT…YLQSVKGADS (96 aa)) constitute a Rhodanese domain. The Cysteine persulfide intermediate role is filled by Cys181.

Belongs to the TrhO family.

The catalysed reaction is uridine(34) in tRNA + AH2 + O2 = 5-hydroxyuridine(34) in tRNA + A + H2O. Functionally, catalyzes oxygen-dependent 5-hydroxyuridine (ho5U) modification at position 34 in tRNAs. The polypeptide is tRNA uridine(34) hydroxylase (Anaplasma phagocytophilum (strain HZ)).